Consider the following 246-residue polypeptide: MSGHSKWHNIQAKKGKNDAAKGRIFTKIGRELILAARDGGSNPDTNAKLRDVIAKAKAANMPNDTIDRAIKKGAGELEGITYEEIVYEGYAPGGVAVMVKCLTDNRNRSAASVRHKFDKYGGNLGANGCVSYMFQRKGQLVIEKTDEIDEDELMMQALEAGAEDFSAEEEVFEITTDPEDFSAVREELEKNGYTFLEADVTMIPDVMAAVDMETAPKTQKLLDMLEEDDDVQDVYHNAEYPEEFEG.

It belongs to the TACO1 family.

The protein resides in the cytoplasm. The protein is Probable transcriptional regulatory protein NT01CX_1819 of Clostridium novyi (strain NT).